We begin with the raw amino-acid sequence, 155 residues long: Catabolic 3-dehydroquinase (155 aa).

Catalysis depends on Tyr-24, which acts as the Proton acceptor. Residues Asn-75, His-81, and Asp-88 each coordinate substrate. His-101 acts as the Proton donor in catalysis. Substrate contacts are provided by residues 102–103 and Arg-112; that span reads VS.

The protein belongs to the type-II 3-dehydroquinase family. In terms of assembly, homododecamer. Adopts a ring-like structure, composed of an arrangement of two hexameric rings stacked on top of one another.

It catalyses the reaction 3-dehydroquinate = 3-dehydroshikimate + H2O. The protein operates within aromatic compound metabolism; 3,4-dihydroxybenzoate biosynthesis; 3,4-dihydroxybenzoate from 3-dehydroquinate: step 1/2. In terms of biological role, is involved in the catabolism of quinate. Allows the utilization of quinate as carbon source via the beta-ketoadipate pathway. This is Catabolic 3-dehydroquinase from Penicillium rubens (strain ATCC 28089 / DSM 1075 / NRRL 1951 / Wisconsin 54-1255) (Penicillium chrysogenum).